Here is a 299-residue protein sequence, read N- to C-terminus: Protein PRY1 (299 aa).

Residues 1-19 (MKLSKLSILTSALATSALA) form the signal peptide. The segment at 103 to 157 (TDSTTTLTSSESTSQSLAQATTTSTPAAASTTSTPAATTTTSQAAATSSASSSDS) is disordered. The 115-residue stretch at 167–281 (LAEHNKKRAL…AWGDYVICSY (115 aa)) folds into the SCP domain.

This sequence belongs to the CRISP family. Post-translationally, O-glycosylated.

The protein resides in the secreted. Secreted protein required for efficient export of lipids such as acetylated sterols. Acts in detoxification of hydrophobic compounds. The sequence is that of Protein PRY1 from Saccharomyces cerevisiae (strain ATCC 204508 / S288c) (Baker's yeast).